The sequence spans 113 residues: Propane 2-monooxygenase, effector component (113 aa).

It belongs to the TmoD/XamoD family. As to quaternary structure, the propane 2-monooxygenase multicomponent enzyme system is composed of an electron transfer component and a monooxygenase component interacting with the effector protein PrmD. The electron transfer component is composed of a reductase (PrmB), and the monooxygenase component is formed by a large subunit (PrmA) and a small subunit (PrmC).

Functionally, effector component of the propane 2-monooxygenase multicomponent enzyme system which is involved in the degradation of propane via the O2-dependent hydroxylation of propane. This chain is Propane 2-monooxygenase, effector component, found in Rhodococcus jostii (strain RHA1).